A 472-amino-acid chain; its full sequence is 2-methylcitrate synthase, mitochondrial (472 aa).

The transit peptide at Met1 to Tyr29 directs the protein to the mitochondrion. Residues Arg75 and Lys193 each coordinate CoA. His271 lines the oxaloacetate pocket. Leu306 contributes to the CoA binding site. The active site involves His307. Val348, Gly350, and Tyr351 together coordinate CoA. Positions 353 and 362 each coordinate oxaloacetate. His353 is an active-site residue. Positions 402, 403, and 408 each coordinate CoA. Asp410 is a catalytic residue. Residues Arg436 and Arg456 each contribute to the oxaloacetate site.

It belongs to the citrate synthase family. Homodimer.

It is found in the mitochondrion matrix. It catalyses the reaction propanoyl-CoA + oxaloacetate + H2O = (2S,3S)-2-methylcitrate + CoA + H(+). The catalysed reaction is oxaloacetate + acetyl-CoA + H2O = citrate + CoA + H(+). It participates in organic acid metabolism; propanoate degradation. Its function is as follows. Component of the methylcitrate cycle that catalyzes the synthesis of (2S,3S)-2-methylcitrate from propionyl-CoA and oxaloacetate. Plays an important role in detoxification of propionyl-CoA, an inhibitor of both primary and secondary metabolism. Also has citrate synthase activity using as substrates acetyl-CoA and oxaloacetate. This chain is 2-methylcitrate synthase, mitochondrial, found in Fusarium solani (Filamentous fungus).